Here is a 77-residue protein sequence, read N- to C-terminus: U8-lycotoxin-Ls1s (77 aa).

Positions 1–20 are cleaved as a signal peptide; it reads MKLIIFTGLVLFAIVSLIEA. The propeptide occupies 21–26; that stretch reads QAENER.

Belongs to the neurotoxin 19 (CSTX) family. 08 (U8-Lctx) subfamily. Contains 4 disulfide bonds. As to expression, expressed by the venom gland.

Its subcellular location is the secreted. The sequence is that of U8-lycotoxin-Ls1s from Lycosa singoriensis (Wolf spider).